Reading from the N-terminus, the 577-residue chain is Zinc finger-containing ubiquitin peptidase 1 (577 aa).

The C2H2-type 1 zinc finger occupies 2-24 (LSCNICGETVNSEPDMKAHLIVH). Residues 29–52 (IICPFCKLSGINYNEICFHIETVH) form a C2H2-type 2; atypical zinc finger. The segment covering 124–137 (ESRKYQKSREKKPG) has biased composition (basic and acidic residues). Positions 124 to 145 (ESRKYQKSREKKPGLSEAQGSI) are disordered. A C2H2-type 3; atypical zinc finger spans residues 153-176 (PECPFCGKIEGCSQDMEIHVKTKH). The C2H2-type 4 zinc finger occupies 192 to 214 (YDCPMCGLVCTNYHILQEHVDLH). Residues 225–247 (DRVQCSSDRELAHRLQQEEDRKR) are MIU. The disordered stretch occupies residues 238–260 (RLQQEEDRKRKSEESRQEREEFQ). The interval 248 to 273 (KSEESRQEREEFQKLQRQYGLDNSGG) is zUBD/ZHA. Lysine 261 carries the post-translational modification N6-acetyllysine. The active-site Nucleophile is the cysteine 359. Histidine 490 functions as the Proton acceptor in the catalytic mechanism. Aspartate 511 is a catalytic residue.

The protein belongs to the peptidase C78 family. ZUFSP subfamily. As to quaternary structure, interacts with RPA1 and RPA2.

It localises to the cytoplasm. It is found in the nucleus. The catalysed reaction is Thiol-dependent hydrolysis of ester, thioester, amide, peptide and isopeptide bonds formed by the C-terminal Gly of ubiquitin (a 76-residue protein attached to proteins as an intracellular targeting signal).. Deubiquitinase with endodeubiquitinase activity that specifically interacts with and cleaves 'Lys-63'-linked long polyubiquitin chains. Shows only weak activity against 'Lys-11' and 'Lys-48'-linked chains. Plays an important role in genome stability pathways, functioning to prevent spontaneous DNA damage and also promote cellular survival in response to exogenous DNA damage. Modulates the ubiquitination status of replication protein A (RPA) complex proteins in response to replication stress. This is Zinc finger-containing ubiquitin peptidase 1 from Mus musculus (Mouse).